A 353-amino-acid chain; its full sequence is Photosystem II protein D1 (353 aa).

N-acetylthreonine is present on threonine 2. Threonine 2 is subject to Phosphothreonine. The next 3 helical transmembrane spans lie at 29 to 46 (YIGWFGVLMIPTLLTATS), 118 to 133 (HFLLGVACYMGREWEL), and 142 to 156 (WIAVAYSAPVAAATA). Histidine 118 is a chlorophyll a binding site. Tyrosine 126 is a pheophytin a binding site. The [CaMn4O5] cluster site is built by aspartate 170 and glutamate 189. A helical transmembrane segment spans residues 197-218 (FHMLGVAGVFGGSLFSAMHGSL). Position 198 (histidine 198) interacts with chlorophyll a. A quinone contacts are provided by residues histidine 215 and 264 to 265 (SF). Histidine 215 is a binding site for Fe cation. Residue histidine 272 coordinates Fe cation. A helical transmembrane segment spans residues 274-288 (FLAAWPVVGIWFTAL). Residues histidine 332, glutamate 333, aspartate 342, and alanine 344 each coordinate [CaMn4O5] cluster. Positions 345-353 (SIEAPLVNG) are excised as a propeptide.

Belongs to the reaction center PufL/M/PsbA/D family. In terms of assembly, PSII is composed of 1 copy each of membrane proteins PsbA, PsbB, PsbC, PsbD, PsbE, PsbF, PsbH, PsbI, PsbJ, PsbK, PsbL, PsbM, PsbT, PsbX, PsbY, PsbZ, Psb30/Ycf12, at least 3 peripheral proteins of the oxygen-evolving complex and a large number of cofactors. It forms dimeric complexes. It depends on The D1/D2 heterodimer binds P680, chlorophylls that are the primary electron donor of PSII, and subsequent electron acceptors. It shares a non-heme iron and each subunit binds pheophytin, quinone, additional chlorophylls, carotenoids and lipids. D1 provides most of the ligands for the Mn4-Ca-O5 cluster of the oxygen-evolving complex (OEC). There is also a Cl(-1) ion associated with D1 and D2, which is required for oxygen evolution. The PSII complex binds additional chlorophylls, carotenoids and specific lipids. as a cofactor. Tyr-161 forms a radical intermediate that is referred to as redox-active TyrZ, YZ or Y-Z. Post-translationally, C-terminally processed by CTPA; processing is essential to allow assembly of the oxygen-evolving complex and thus photosynthetic growth.

Its subcellular location is the plastid. The protein resides in the chloroplast thylakoid membrane. It catalyses the reaction 2 a plastoquinone + 4 hnu + 2 H2O = 2 a plastoquinol + O2. Photosystem II (PSII) is a light-driven water:plastoquinone oxidoreductase that uses light energy to abstract electrons from H(2)O, generating O(2) and a proton gradient subsequently used for ATP formation. It consists of a core antenna complex that captures photons, and an electron transfer chain that converts photonic excitation into a charge separation. The D1/D2 (PsbA/PsbD) reaction center heterodimer binds P680, the primary electron donor of PSII as well as several subsequent electron acceptors. This Psilotum nudum (Whisk fern) protein is Photosystem II protein D1.